Consider the following 464-residue polypeptide: ATP synthase subunit beta (464 aa).

153 to 160 contacts ATP; the sequence is GGAGVGKT.

It belongs to the ATPase alpha/beta chains family. F-type ATPases have 2 components, CF(1) - the catalytic core - and CF(0) - the membrane proton channel. CF(1) has five subunits: alpha(3), beta(3), gamma(1), delta(1), epsilon(1). CF(0) has three main subunits: a(1), b(2) and c(9-12). The alpha and beta chains form an alternating ring which encloses part of the gamma chain. CF(1) is attached to CF(0) by a central stalk formed by the gamma and epsilon chains, while a peripheral stalk is formed by the delta and b chains.

The protein localises to the cell inner membrane. It carries out the reaction ATP + H2O + 4 H(+)(in) = ADP + phosphate + 5 H(+)(out). In terms of biological role, produces ATP from ADP in the presence of a proton gradient across the membrane. The catalytic sites are hosted primarily by the beta subunits. The protein is ATP synthase subunit beta of Burkholderia ambifaria (strain MC40-6).